The following is a 218-amino-acid chain: Glutathione S-transferase Mu 3 (218 aa).

Positions 2 to 88 (PMTLGYWNTR…YLGRKHNLCG (87 aa)) constitute a GST N-terminal domain. Residues 7–8 (YW), 46–50 (WLSEK), and 59–60 (NL) contribute to the glutathione site. Residue Lys50 forms a Glycyl lysine isopeptide (Lys-Gly) (interchain with G-Cter in SUMO2) linkage. Residue Lys69 forms a Glycyl lysine isopeptide (Lys-Gly) (interchain with G-Cter in SUMO2) linkage. 72–73 (QS) is a glutathione binding site. The region spanning 90-208 (TEEERIRVDT…KSSRFLPRPV (119 aa)) is the GST C-terminal domain.

This sequence belongs to the GST superfamily. Mu family. Homodimer.

The protein resides in the cytoplasm. It carries out the reaction RX + glutathione = an S-substituted glutathione + a halide anion + H(+). In terms of biological role, conjugation of reduced glutathione to a wide number of exogenous and endogenous hydrophobic electrophiles. In Mus musculus (Mouse), this protein is Glutathione S-transferase Mu 3 (Gstm3).